Reading from the N-terminus, the 445-residue chain is Exodeoxyribonuclease 7 large subunit (445 aa).

This sequence belongs to the XseA family. As to quaternary structure, heterooligomer composed of large and small subunits.

The protein localises to the cytoplasm. The enzyme catalyses Exonucleolytic cleavage in either 5'- to 3'- or 3'- to 5'-direction to yield nucleoside 5'-phosphates.. Its function is as follows. Bidirectionally degrades single-stranded DNA into large acid-insoluble oligonucleotides, which are then degraded further into small acid-soluble oligonucleotides. The protein is Exodeoxyribonuclease 7 large subunit of Staphylococcus epidermidis (strain ATCC 12228 / FDA PCI 1200).